Consider the following 1077-residue polypeptide: Hemoglobin and hemoglobin-haptoglobin-binding protein A (1077 aa).

Residues 1-24 (MTNFRLNVLAYSVMLGLTASVAYA) form the signal peptide. Residues 25–72 (EPTNQPTNQPTNQPTNQPTNQPTNQPTNQPTNQPTNQPTNQPTNQNSN) form a disordered region. 11 consecutive repeat copies span residues 26–29 (PTNQ), 30–33 (PTNQ), 34–37 (PTNQ), 38–41 (PTNQ), 42–45 (PTNQ), 46–49 (PTNQ), 50–53 (PTNQ), 54–57 (PTNQ), 58–61 (PTNQ), 62–65 (PTNQ), and 66–69 (PTNQ). The segment at 26-69 (PTNQPTNQPTNQPTNQPTNQPTNQPTNQPTNQPTNQPTNQPTNQ) is 11 X 4 AA tandem repeats of P-T-N-Q. Low complexity predominate over residues 26-70 (PTNQPTNQPTNQPTNQPTNQPTNQPTNQPTNQPTNQPTNQPTNQN). The short motif at 78 to 85 (EQINVSGS) is the TonB box element. In terms of domain architecture, TBDR plug spans 89-216 (TDTKAPPKIA…LGGSVSLDTK (128 aa)). The region spanning 224-1077 (NKNYYASYKR…NYRMSVQFEF (854 aa)) is the TBDR beta-barrel domain. The short motif at 1060–1077 (NRFYAPERNYRMSVQFEF) is the TonB C-terminal box element.

The protein belongs to the TonB-dependent receptor family. Hemoglobin/haptoglobin binding protein subfamily.

It is found in the cell outer membrane. In terms of biological role, acts as a receptor for hemoglobin or the hemoglobin/haptoglobin complex of the human host and is required for heme uptake. The protein is Hemoglobin and hemoglobin-haptoglobin-binding protein A (hgpA) of Haemophilus influenzae.